The primary structure comprises 833 residues: Zinc phosphodiesterase ELAC protein 2 homolog (833 aa).

A mitochondrion-targeting transit peptide spans 1–19 (MLGAIARKTVENRILVSRH). Residues 624 to 646 (LTPPGSPGGPPGKRPRLPSPHLP) show a composition bias toward pro residues. The disordered stretch occupies residues 624–652 (LTPPGSPGGPPGKRPRLPSPHLPPSRDVL).

It belongs to the RNase Z family. As to quaternary structure, homodimer. It depends on Zn(2+) as a cofactor. In terms of tissue distribution, highly expressed in the germline.

It is found in the mitochondrion. The protein resides in the nucleus. The enzyme catalyses Endonucleolytic cleavage of RNA, removing extra 3' nucleotides from tRNA precursor, generating 3' termini of tRNAs. A 3'-hydroxy group is left at the tRNA terminus and a 5'-phosphoryl group is left at the trailer molecule.. Functionally, zinc phosphodiesterase, which displays some tRNA 3'-processing endonuclease activity. Probably involved in tRNA maturation, by removing a 3'-trailer from precursor tRNA. Involved in germline proliferation. May be required for both mitosis and meiosis in germ cells. In terms of biological role, does not regulate the mitochondrial unfolded protein response following mitochondrial stress. Its function is as follows. Plays a role in mitochondrial unfolded protein response. Upon mitochondrial stress is exported from the nucleus where its tRNA endonuclease activity is negatively regulated. In response to mitochondrial stress, might be involved in activating a transcriptional response in an ATFS-1- and DVE-1-dependent manner. May play a role in negatively regulating the mitochondrial membrane potential. This is Zinc phosphodiesterase ELAC protein 2 homolog from Caenorhabditis elegans.